The following is a 649-amino-acid chain: MFQNNPLLTQLKKNLHAKSPRVEGIVKSTERGFGFLEVDPQKSYFIPPKNMKNVMHGDKIIALLTTEKDREIVEPEKLIEPFLNRFVGKIEKKDNRLFIVPDYPFLKDLITCQPNKNCINIFQNGDWAVAQLKKHKLKGDHLFYAELTEKITQEDDPLIPWWVTLARHDLDRKEPLAEEDDLILKESDNRKDLTDLDFITIDNTNTKDIDDALFVSEKNNGDISLIVAIADPTAYIKHGSKLDVIASKRIFTNYLPGFNIPMLPRNLSEDICSLNPNKRRPVLACHITVLKNGNISNKIEFFLAWIKSKSKLSYDHVSDWIEKIGSWIPPTKSIANQILILHRLCLLRIKWRKKNAVLFKDSIEYRFHVSEHGKIIDVLIEKRRIAHKIIEESMIVANISAANFLSKNIGFGIYNVHSGFDLVNAENAVSFLRSYNLNFTVKEITTLKGFCNLRRVLNIISNNYIDSRIRRFQSFGDFSTIPGPHFALGFSEYATWTSPIRKYSDMINHRLLKSIIKKEKSIKPGEDIKIKISEQRRRNRMAERDVSDWLYTIFLQKKKYQNQKFNAEITDISRSGIRARLIENGANVFIPGTLIHPIREELNFNQESGKVFINGIMHYKISDLIQVTLSDIRLKTRSIIAKPVFEKFK.

An RNB domain is found at 190–517 (RKDLTDLDFI…NHRLLKSIIK (328 aa)). Residues 562–644 (NQKFNAEITD…KTRSIIAKPV (83 aa)) enclose the S1 motif domain.

Belongs to the RNR ribonuclease family. RNase II subfamily.

It localises to the cytoplasm. It carries out the reaction Exonucleolytic cleavage in the 3'- to 5'-direction to yield nucleoside 5'-phosphates.. Its function is as follows. Involved in mRNA degradation. Hydrolyzes single-stranded polyribonucleotides processively in the 3' to 5' direction. The protein is Exoribonuclease 2 of Buchnera aphidicola subsp. Acyrthosiphon pisum (strain 5A).